Here is a 544-residue protein sequence, read N- to C-terminus: Chaperonin GroEL (544 aa).

ATP is bound by residues 30–33, K51, 87–91, G415, and D495; these read TLGP and DGTTT.

The protein belongs to the chaperonin (HSP60) family. Forms a cylinder of 14 subunits composed of two heptameric rings stacked back-to-back. Interacts with the co-chaperonin GroES.

It is found in the cytoplasm. The enzyme catalyses ATP + H2O + a folded polypeptide = ADP + phosphate + an unfolded polypeptide.. Functionally, together with its co-chaperonin GroES, plays an essential role in assisting protein folding. The GroEL-GroES system forms a nano-cage that allows encapsulation of the non-native substrate proteins and provides a physical environment optimized to promote and accelerate protein folding. This chain is Chaperonin GroEL, found in Neisseria meningitidis serogroup A / serotype 4A (strain DSM 15465 / Z2491).